Reading from the N-terminus, the 518-residue chain is MADTDEGFGLARTPLEPDSKDRSCDSKPESALGAPSKSPSSPQAAFTQQGMEGIKVFLHERELWLKFHEVGTEMIITKAGRRMFPSYKVKVTGLNPKTKYILLMDIVPADDHRYKFADNKWSVTGKAEPAMPGRLYVHPDSPATGAHWMRQLVSFQKLKLTNNHLDPFGHIILNSMHKYQPRLHIVKADENNGFGSKNTAFCTHVFPETAFIAVTSYQNHKITQLKIENNPFAKGFRGSDDLELHRMSRMQSKEYPVVPRSTVRHKVTSNHSPFSSETRALSTSSNLGSQYQCENGVSGPSQDLLPPPNPYPLAQEHSQIYHCTKRKDEECSSTEHPYKKPYMETSPSEEDTFYRSGYPQQQGLSTSYRTESAQRQACMYASSAPPSEPVPSLEDISCNTWPSMPSYSSCTVTTVQPMDRLPYQHFSAHFTSGPLVPRLAGMANHGSPQLGEGMFQHQTSVAHQPVVRQCGPQTGLQSPGGLQPPEFLYTHGVPRTLSPHQYHSVHGVGMVPEWSENS.

The segment at 1–46 is disordered; the sequence is MADTDEGFGLARTPLEPDSKDRSCDSKPESALGAPSKSPSSPQAAF. Basic and acidic residues predominate over residues 15–28; it reads LEPDSKDRSCDSKP. Low complexity predominate over residues 34 to 45; sequence APSKSPSSPQAA. The T-box DNA-binding region spans 58–238; the sequence is LHERELWLKF…NNPFAKGFRG (181 aa). Disordered stretches follow at residues 254–307 and 330–352; these read EYPV…LLPP and ECSS…EEDT. A compositionally biased stretch (polar residues) spans 269–301; it reads SNHSPFSSETRALSTSSNLGSQYQCENGVSGPS. Lys-339 is subject to N6-acetyllysine.

As to quaternary structure, monomer. Homodimer (via the T-box); binds DNA as homodimer. Interacts (via the T-box) with NKX2-5 (via the homeobox); this complex binds DNA. Interacts with GATA4. Interacts with KAT2A and KAT2B. Post-translationally, acetylation at Lys-339 by KAT2A and KAT2B promotes nuclear retention.

The protein localises to the nucleus. It localises to the cytoplasm. Functionally, DNA-binding protein that regulates the transcription of several genes and is involved in heart development and limb pattern formation. Binds to the core DNA motif of NPPA promoter. The polypeptide is T-box transcription factor TBX5 (Tbx5) (Mus musculus (Mouse)).